A 145-amino-acid chain; its full sequence is Cuticle protein 7 (145 aa).

The region spanning 41–114 (PVNVATSYHA…VASNALPVGP (74 aa)) is the Chitin-binding type R&amp;R domain.

In Blaberus craniifer (Death's head cockroach), this protein is Cuticle protein 7.